The primary structure comprises 265 residues: Cell division protein DivIB (265 aa).

Residues 1 to 30 (MKNSKVIKLQDRVPKLKNQQKKKKKNVNHR) are Cytoplasmic-facing. A helical transmembrane segment spans residues 31–51 (LILYISILFLLVLFLIYFRSP). Topologically, residues 52-265 (LSNIKKISVF…NRMIVFNTLS (214 aa)) are extracellular. The region spanning 53 to 121 (SNIKKISVFG…NKIDVHIEEY (69 aa)) is the POTRA domain.

The protein belongs to the FtsQ/DivIB family. DivIB subfamily.

It is found in the cell membrane. Its function is as follows. Cell division protein that may be involved in stabilizing or promoting the assembly of the division complex. This chain is Cell division protein DivIB, found in Bacillus anthracis.